Here is a 253-residue protein sequence, read N- to C-terminus: 3-deoxy-manno-octulosonate cytidylyltransferase (253 aa).

Belongs to the KdsB family.

The protein resides in the cytoplasm. It carries out the reaction 3-deoxy-alpha-D-manno-oct-2-ulosonate + CTP = CMP-3-deoxy-beta-D-manno-octulosonate + diphosphate. It functions in the pathway nucleotide-sugar biosynthesis; CMP-3-deoxy-D-manno-octulosonate biosynthesis; CMP-3-deoxy-D-manno-octulosonate from 3-deoxy-D-manno-octulosonate and CTP: step 1/1. The protein operates within bacterial outer membrane biogenesis; lipopolysaccharide biosynthesis. In terms of biological role, activates KDO (a required 8-carbon sugar) for incorporation into bacterial lipopolysaccharide in Gram-negative bacteria. In Neisseria meningitidis serogroup B (strain ATCC BAA-335 / MC58), this protein is 3-deoxy-manno-octulosonate cytidylyltransferase.